Reading from the N-terminus, the 61-residue chain is MAKKSQIAKNKRPAKFSTQEYTRCERCGRPHSVYRKFKLCRVCLRDLAHKGQIPGMKKASW.

Residues Cys24, Cys27, Cys40, and Cys43 each contribute to the Zn(2+) site.

It belongs to the universal ribosomal protein uS14 family. Zinc-binding uS14 subfamily. In terms of assembly, part of the 30S ribosomal subunit. Contacts proteins S3 and S10. The cofactor is Zn(2+).

Functionally, binds 16S rRNA, required for the assembly of 30S particles and may also be responsible for determining the conformation of the 16S rRNA at the A site. In Ligilactobacillus salivarius (strain UCC118) (Lactobacillus salivarius), this protein is Small ribosomal subunit protein uS14B.